The chain runs to 117 residues: Putative membrane protein insertion efficiency factor (117 aa).

It belongs to the UPF0161 family.

The protein resides in the cell inner membrane. In terms of biological role, could be involved in insertion of integral membrane proteins into the membrane. This Bartonella bacilliformis (strain ATCC 35685 / KC583 / Herrer 020/F12,63) protein is Putative membrane protein insertion efficiency factor.